We begin with the raw amino-acid sequence, 812 residues long: Probable inorganic carbon transporter subunit DabA (812 aa).

Cys338, Asp340, His498, and Cys513 together coordinate Zn(2+).

The protein belongs to the inorganic carbon transporter (TC 9.A.2) DabA family. As to quaternary structure, forms a complex with DabB. Zn(2+) is required as a cofactor.

It localises to the cell inner membrane. In terms of biological role, part of an energy-coupled inorganic carbon pump. The protein is Probable inorganic carbon transporter subunit DabA of Methylobacterium sp. (strain 4-46).